Consider the following 117-residue polypeptide: Large ribosomal subunit protein bL20c (117 aa).

Belongs to the bacterial ribosomal protein bL20 family.

It localises to the plastid. The protein resides in the chloroplast. In terms of biological role, binds directly to 23S ribosomal RNA and is necessary for the in vitro assembly process of the 50S ribosomal subunit. It is not involved in the protein synthesizing functions of that subunit. This chain is Large ribosomal subunit protein bL20c, found in Vitis vinifera (Grape).